The sequence spans 1007 residues: Beta-galactosidase A (1007 aa).

Residues 1 to 18 (MKLSSACAIALLAAQAAG) form the signal peptide. Substrate is bound by residues Tyr-96 and 140 to 142 (NAE). Residue Asn-156 is glycosylated (N-linked (GlcNAc...) asparagine). Asn-199 provides a ligand contact to substrate. The active-site Proton donor is the Glu-200. Cystine bridges form between Cys-205–Cys-206 and Cys-266–Cys-315. Glu-298 (nucleophile) is an active-site residue. Position 364 (Tyr-364) interacts with substrate. N-linked (GlcNAc...) asparagine glycosylation is found at Asn-402, Asn-422, Asn-478, Asn-522, Asn-622, Asn-739, Asn-760, Asn-777, Asn-805, and Asn-914.

Belongs to the glycosyl hydrolase 35 family.

Its subcellular location is the secreted. The enzyme catalyses Hydrolysis of terminal non-reducing beta-D-galactose residues in beta-D-galactosides.. Cleaves beta-linked terminal galactosyl residues from gangliosides, glycoproteins, and glycosaminoglycans. The sequence is that of Beta-galactosidase A (lacA) from Aspergillus niger (strain ATCC MYA-4892 / CBS 513.88 / FGSC A1513).